The following is a 441-amino-acid chain: L-seryl-tRNA(Sec) selenium transferase (441 aa).

K283 is modified (N6-(pyridoxal phosphate)lysine).

It belongs to the SelA family. It depends on pyridoxal 5'-phosphate as a cofactor.

It is found in the cytoplasm. The catalysed reaction is L-seryl-tRNA(Sec) + selenophosphate + H(+) = L-selenocysteinyl-tRNA(Sec) + phosphate. It participates in aminoacyl-tRNA biosynthesis; selenocysteinyl-tRNA(Sec) biosynthesis; selenocysteinyl-tRNA(Sec) from L-seryl-tRNA(Sec) (bacterial route): step 1/1. Functionally, converts seryl-tRNA(Sec) to selenocysteinyl-tRNA(Sec) required for selenoprotein biosynthesis. The chain is L-seryl-tRNA(Sec) selenium transferase from Campylobacter concisus (strain 13826).